The following is a 293-amino-acid chain: MPRSHDPSRVELLRKEGGLTEKRVSISVEDIRGAVANWKNSGGAGDPITPYPLPQFFLQPPSTAGGGSRNGVGSKEGSVTSLRMPLKKAGDDVDLGHRGELDLSEKYNYDLSRAQLKASSRTSALLAGFAMVCLVELQYDQSTPKPLLIVLGVVTSLLVSVHLLALMMSTCILPYMEATGCTQDSPHIKLKFYIDLSWLFSTCIGLLLFLVEIGVIFYVKFTAVGYPTAGYITTAMLVPVGVVFVVFSYLIHKNRVSHSLGRFKHKVDTMKQFLDVEANLQKSTLAPSTIRDI.

The Cytoplasmic segment spans residues 1–122; the sequence is MPRSHDPSRV…RAQLKASSRT (122 aa). The segment at 62–81 is disordered; the sequence is STAGGGSRNGVGSKEGSVTS. The chain crosses the membrane as a helical span at residues 123–141; the sequence is SALLAGFAMVCLVELQYDQ. Over 142–146 the chain is Extracellular; sequence STPKP. Residues 147 to 167 traverse the membrane as a helical segment; the sequence is LLIVLGVVTSLLVSVHLLALM. Topologically, residues 168–198 are cytoplasmic; the sequence is MSTCILPYMEATGCTQDSPHIKLKFYIDLSW. Residues 199 to 219 traverse the membrane as a helical segment; sequence LFSTCIGLLLFLVEIGVIFYV. The Extracellular portion of the chain corresponds to 220 to 230; that stretch reads KFTAVGYPTAG. A helical membrane pass occupies residues 231-251; it reads YITTAMLVPVGVVFVVFSYLI. Residues 252 to 293 lie on the Cytoplasmic side of the membrane; sequence HKNRVSHSLGRFKHKVDTMKQFLDVEANLQKSTLAPSTIRDI.

It belongs to the Orai family. Expressed in gonad sheath cells, hypodermis, intestine and spermatheca. Coexpressed with stim-1.

The protein localises to the membrane. Its function is as follows. Ca(2+) release-activated Ca(2+)-like (CRAC-like) channel subunit which mediates Ca(2+) influx and increase in Ca(2+)-selective current by synergy with the Ca(2+) sensor, stim-1. Required for Ca(2+) and IP3-dependent contractile activity of sheath cells and the spermatheca. Affects brood size and somatic cell function. In Caenorhabditis elegans, this protein is Protein orai (orai-1).